The primary structure comprises 591 residues: ESX-1 secretion system protein EccCb1 (591 aa).

FtsK domains lie at 65–259 and 359–545; these read LQDV…NETQ and LTPA…EKQE. ATP contacts are provided by residues 84-91 and 376-383; these read GAPQTGKS and GAAKSGKT.

In terms of assembly, part of the ESX-1 / type VII secretion system (T7SS), which is composed of cytosolic and membrane components. The ESX-1 membrane complex is composed of EccB1, EccCa1, EccCb1, EccD1 and EccE1. Interacts with EccCa1, EspK and the C-terminus of EsxB. Residues 1-261 interact with EsxB and an artificial EsxB-EsxA heterodimer.

It localises to the cytoplasm. Its activity is regulated as follows. EsxB binding to the second FtsK domain of EccCb1 causes multimerization; a subsequent unknown step relieves the allosteric inhibition of linker 2 on FtsK domain 1 (in EccCa1 subunit), activating the ATPase activity. In terms of biological role, part of the ESX-1 specialized secretion system, which delivers several virulence factors to host cells during infection, including the key virulence factors EsxA (ESAT-6) and EsxB (CFP-10). EccCb1 may link the cytosolic components of the system with the membrane components. The sequence is that of ESX-1 secretion system protein EccCb1 from Mycobacterium tuberculosis (strain ATCC 25618 / H37Rv).